Reading from the N-terminus, the 370-residue chain is Galanin receptor type 3 (370 aa).

Topologically, residues 1–20 (MADIQNISLDSPGSVGAVAV) are extracellular. Asn-6 is a glycosylation site (N-linked (GlcNAc...) asparagine). Residues 21–41 (PVVFALIFLLGMVGNGLVLAV) traverse the membrane as a helical segment. The Cytoplasmic segment spans residues 42–57 (LLQPGPSAWQEPGSTT). Residues 58–78 (DLFILNLAVADLCFILCCVPF) form a helical membrane-spanning segment. Residues 79–96 (QAAIYTLDAWLFGAFVCK) lie on the Extracellular side of the membrane. A disulfide bridge links Cys-95 with Cys-172. A helical transmembrane segment spans residues 97–118 (TVHLLIYLTMYASSFTLAAVSV). At 119–138 (DRYLAVRHPLRSRALRTPRN) the chain is on the cytoplasmic side. The helical transmembrane segment at 139 to 159 (ARAAVGLVWLLAALFSAPYLS) threads the bilayer. At 160–184 (YYGTVRYGALELCVPAWEDARRRAL) the chain is on the extracellular side. A helical transmembrane segment spans residues 185-205 (DVATFAAGYLLPVTVVSLAYG). Residues 206-236 (RTLCFLWAAVGPAGAAAAEARRRATGRAGRA) are Cytoplasmic-facing. A helical transmembrane segment spans residues 237–257 (MLTVAALYALCWGPHHALILC). Topologically, residues 258–259 (FW) are extracellular. A helical transmembrane segment spans residues 260–280 (YGRFAFSPATYACRLASHCLA). Over 281 to 370 (YANSCLNPLV…RLTLSARGPQ (90 aa)) the chain is Cytoplasmic. The S-palmitoyl cysteine moiety is linked to residue Cys-308. The tract at residues 328–370 (QPASSGPAGYPGDARPRGWSMEPRGDALRGGETRLTLSARGPQ) is disordered. Over residues 350 to 359 (PRGDALRGGE) the composition is skewed to basic and acidic residues.

The protein belongs to the G-protein coupled receptor 1 family.

It localises to the cell membrane. Functionally, receptor for the hormone galanin and spexin-1. The polypeptide is Galanin receptor type 3 (Galr3) (Mus musculus (Mouse)).